The following is a 240-amino-acid chain: Probable transcriptional regulator ycf27 (240 aa).

Positions Lys-5–Leu-118 constitute a Response regulatory domain. The residue at position 54 (Asp-54) is a 4-aspartylphosphate. A DNA-binding region (H-T-H motif) is located at residues Asp-74–Gly-92. The ompR/PhoB-type DNA-binding region spans Ser-133–Arg-234.

The protein resides in the plastid. The protein localises to the chloroplast. Its function is as follows. Probable promoter-specific protein mediating the interaction between DNA and RNA polymerase. In Porphyridium aerugineum (Red microalga), this protein is Probable transcriptional regulator ycf27 (ycf27).